We begin with the raw amino-acid sequence, 104 residues long: Ig lambda-3 chain C region (104 aa).

An Ig-like domain is found at Pro6–Ser99. Cys27 and Cys85 are disulfide-bonded.

The chain is Ig lambda-3 chain C region (Iglc3) from Mus musculus (Mouse).